Consider the following 373-residue polypeptide: Dual-specificity RNA methyltransferase RlmN (373 aa).

Catalysis depends on Glu-101, which acts as the Proton acceptor. One can recognise a Radical SAM core domain in the interval 107–350 (ENKRTTLCVS…TIIRKIRGAD (244 aa)). Cys-114 and Cys-355 form a disulfide bridge. Cys-121, Cys-125, and Cys-128 together coordinate [4Fe-4S] cluster. Residues 179-180 (GE), Ser-211, 233-235 (SLH), and Asn-312 each bind S-adenosyl-L-methionine. Cys-355 serves as the catalytic S-methylcysteine intermediate.

This sequence belongs to the radical SAM superfamily. RlmN family. The cofactor is [4Fe-4S] cluster.

It localises to the cytoplasm. The enzyme catalyses adenosine(2503) in 23S rRNA + 2 reduced [2Fe-2S]-[ferredoxin] + 2 S-adenosyl-L-methionine = 2-methyladenosine(2503) in 23S rRNA + 5'-deoxyadenosine + L-methionine + 2 oxidized [2Fe-2S]-[ferredoxin] + S-adenosyl-L-homocysteine. The catalysed reaction is adenosine(37) in tRNA + 2 reduced [2Fe-2S]-[ferredoxin] + 2 S-adenosyl-L-methionine = 2-methyladenosine(37) in tRNA + 5'-deoxyadenosine + L-methionine + 2 oxidized [2Fe-2S]-[ferredoxin] + S-adenosyl-L-homocysteine. In terms of biological role, specifically methylates position 2 of adenine 2503 in 23S rRNA and position 2 of adenine 37 in tRNAs. m2A2503 modification seems to play a crucial role in the proofreading step occurring at the peptidyl transferase center and thus would serve to optimize ribosomal fidelity. The protein is Dual-specificity RNA methyltransferase RlmN of Blochmanniella pennsylvanica (strain BPEN).